The primary structure comprises 286 residues: KH domain-containing protein At2g38610 (286 aa).

Residue S2 is modified to N-acetylserine. The region spanning 141–208 is the KH domain; sequence EIPVDNYPNF…EHLNEQLHIL (68 aa). The interval 256–286 is disordered; that stretch reads SNNLREESPGPSGGGSVSPFNSSGKRPKTGC. 2 positions are modified to phosphoserine: S263 and S273.

The protein localises to the nucleus. This chain is KH domain-containing protein At2g38610, found in Arabidopsis thaliana (Mouse-ear cress).